Here is a 349-residue protein sequence, read N- to C-terminus: Fructose-1,6-bisphosphatase class 1 (349 aa).

The Mg(2+) site is built by E113, D135, I137, and D138. Substrate is bound by residues 138-141 (DGSS), N230, Y258, and K288. E294 is a Mg(2+) binding site.

This sequence belongs to the FBPase class 1 family. Homotetramer. Requires Mg(2+) as cofactor.

The protein localises to the cytoplasm. The enzyme catalyses beta-D-fructose 1,6-bisphosphate + H2O = beta-D-fructose 6-phosphate + phosphate. It participates in carbohydrate biosynthesis; Calvin cycle. This Nostoc punctiforme (strain ATCC 29133 / PCC 73102) protein is Fructose-1,6-bisphosphatase class 1.